We begin with the raw amino-acid sequence, 306 residues long: Reticulocalbin-2 (306 aa).

A signal peptide spans methionine 1–glycine 22. EF-hand domains follow at residues glutamate 50–serine 85, tyrosine 86–aspartate 121, lysine 144–aspartate 173, methionine 175–alanine 210, asparagine 226–glycine 251, and leucine 252–serine 287. Ca(2+)-binding residues include aspartate 99, aspartate 101, aspartate 103, arginine 105, and glutamate 110. Residues aspartate 188, aspartate 190, aspartate 192, glutamate 199, aspartate 229, aspartate 231, aspartate 233, lysine 235, glutamate 240, aspartate 265, aspartate 267, aspartate 269, arginine 271, and glutamate 276 each contribute to the Ca(2+) site.

The protein belongs to the CREC family. May bind phospholipase A2, since the rat reticulocalbin-2 has been isolated on the phospholipase complex taipoxin columns. Expressed by the venom gland.

Its subcellular location is the secreted. The sequence is that of Reticulocalbin-2 from Crotalus adamanteus (Eastern diamondback rattlesnake).